A 447-amino-acid chain; its full sequence is Adenylosuccinate synthetase (447 aa).

GTP contacts are provided by residues 35-41 and 63-65; these read GDEGKGK and GHT. Catalysis depends on Asp-36, which acts as the Proton acceptor. 2 residues coordinate Mg(2+): Asp-36 and Gly-63. Residues 36-39, 61-64, Thr-153, Arg-167, Asn-245, Thr-260, and Arg-324 each bind IMP; these read DEGK and NAGH. His-64 functions as the Proton donor in the catalytic mechanism. 320 to 326 lines the substrate pocket; that stretch reads VTTKRKR. Residues Arg-326, 352-354, and 435-437 contribute to the GTP site; these read KLD and GVG.

It belongs to the adenylosuccinate synthetase family. As to quaternary structure, homodimer. Mg(2+) serves as cofactor.

It is found in the cytoplasm. It carries out the reaction IMP + L-aspartate + GTP = N(6)-(1,2-dicarboxyethyl)-AMP + GDP + phosphate + 2 H(+). It functions in the pathway purine metabolism; AMP biosynthesis via de novo pathway; AMP from IMP: step 1/2. Plays an important role in the de novo pathway and in the salvage pathway of purine nucleotide biosynthesis. Catalyzes the first committed step in the biosynthesis of AMP from IMP. In Drosophila erecta (Fruit fly), this protein is Adenylosuccinate synthetase.